A 220-amino-acid chain; its full sequence is dITP/XTP pyrophosphatase (220 aa).

Ser-13–Lys-18 is a substrate binding site. Residues Asp-45 and Asp-74 each coordinate Mg(2+). Asp-74 functions as the Proton acceptor in the catalytic mechanism. Substrate-binding positions include Ser-75, Phe-163 to Asp-166, Lys-186, and His-199 to Arg-200.

The protein belongs to the HAM1 NTPase family. In terms of assembly, homodimer. The cofactor is Mg(2+).

The catalysed reaction is XTP + H2O = XMP + diphosphate + H(+). The enzyme catalyses dITP + H2O = dIMP + diphosphate + H(+). It catalyses the reaction ITP + H2O = IMP + diphosphate + H(+). Pyrophosphatase that catalyzes the hydrolysis of nucleoside triphosphates to their monophosphate derivatives, with a high preference for the non-canonical purine nucleotides XTP (xanthosine triphosphate), dITP (deoxyinosine triphosphate) and ITP. Seems to function as a house-cleaning enzyme that removes non-canonical purine nucleotides from the nucleotide pool, thus preventing their incorporation into DNA/RNA and avoiding chromosomal lesions. This is dITP/XTP pyrophosphatase from Mesorhizobium japonicum (strain LMG 29417 / CECT 9101 / MAFF 303099) (Mesorhizobium loti (strain MAFF 303099)).